The following is a 131-amino-acid chain: Profilin-7 (131 aa).

Cys-13 and Cys-115 are joined by a disulfide. Residues 81–97 (AVIRGKKGSGGITVKKT) carry the Involved in PIP2 interaction motif. A Phosphothreonine modification is found at Thr-111.

It belongs to the profilin family. As to quaternary structure, occurs in many kinds of cells as a complex with monomeric actin in a 1:1 ratio. Phosphorylated by MAP kinases.

The protein resides in the cytoplasm. It is found in the cytoskeleton. Its function is as follows. Binds to actin and affects the structure of the cytoskeleton. At high concentrations, profilin prevents the polymerization of actin, whereas it enhances it at low concentrations. This Zea mays (Maize) protein is Profilin-7.